Consider the following 566-residue polypeptide: MEVLEEPAPGPGGADAAERRGLRRLLLSGFQEELRALLVLAGPAFLAQLMMFLISFISSVFCGHLGKLELDAVTLAIAVINVTGISVGHGLSSACDTLISQTYGSQNLKHVGVILQRGTLILLLCCFPCWALFINTEQILLLFRQDPDVSRLTQTYVMVFIPALPAAFLYTLQVKYLLNQGIVLPQVITGIAANLVNALANYLFLHQLHLGVMGSALANTISQFALAIFLFLYILWRKLHHATWGGWSWECLQDWASFLQLAIPSMLMLCIEWWAYEVGSFLSGILGMVELGAQSITYELAIIVYMIPAGFSVAANVRVGNALGAGNIDQAKKSSAISLIVTELFAVTFCVLLLGCKDLVGYIFTTDWDIVALVAQVVPIYAVSHLFEALACTCGGVLRGTGNQKVGAIVNAIGYYVIGLPIGISLMFVAKLGVIGLWSGIIICSVCQTSCFLVFIARLNWKLACQQAQVHANLKVNVALNSAVSQEPAHPVGPESHGEIMMTDLEKKDEIQLDQQMNQQQALPVHPKDSNKLSGKQLALRRGLLFLGVVLVLVGGILVRVYIRTE.

Met-1 bears the N-acetylmethionine mark. A run of 13 helical transmembrane segments spans residues 37–57 (LLVL…ISFI), 72–92 (AVTL…HGLS), 120–140 (LILL…EQIL), 152–172 (LTQT…LYTL), 176–196 (YLLN…ANLV), 216–236 (ALAN…YILW), 257–276 (SFLQ…WWAY), 295–315 (SITY…SVAA), 336–356 (AISL…LLGC), 370–390 (IVAL…FEAL), 409–429 (IVNA…LMFV), 437–457 (LWSG…VFIA), and 543–563 (GLLF…RVYI).

It belongs to the multi antimicrobial extrusion (MATE) (TC 2.A.66.1) family. As to expression, highly expressed in kidney and placenta, moderately in stomach, colon, lung, spleen, skeletal muscle and prostate, and slightly in spleen. In the kidney, found in medulla and cortex, especially in the proximal convoluted and straight tubules. No expression was observed in heart, brain, small intestine and liver. Expressed in Sertoli cells in testis.

The protein resides in the cell membrane. It is found in the apical cell membrane. It carries out the reaction thiamine(out) + H(+)(in) = thiamine(in) + H(+)(out). The enzyme catalyses estrone 3-sulfate(in) + H(+)(out) = estrone 3-sulfate(out) + H(+)(in). The catalysed reaction is creatinine(in) + H(+)(out) = creatinine(out) + H(+)(in). It catalyses the reaction agmatine(in) + H(+)(out) = agmatine(out) + H(+)(in). Its function is as follows. Multidrug efflux pump that functions as a H(+)/organic cation antiporter. Plays a physiological role in the excretion of cationic compounds including endogenous metabolites, drugs, toxins through the kidney and liver, into urine and bile respectively. Mediates the efflux of endogenous compounds such as creatinine, vitamin B1/thiamine, agmatine and estrone-3-sulfate. May also contribute to regulate the transport of cationic compounds in testis across the blood-testis-barrier. The chain is Multidrug and toxin extrusion protein 1 (Slc47a1) from Rattus norvegicus (Rat).